We begin with the raw amino-acid sequence, 205 residues long: MEELTKRQSQVLDFIKSYMEKNGFAPSIRDIMKHFNFKSPRAAHKHLIILEKKGYIERKNVSRGIKMMPKSGEIFATETLAPVSGKIAAGDAIEAIQTISDYIPIPTNFFPKNYEYFSLRVEGNSMIEAQIKSGDFVLIRKQDYAMDGDIVVALIDGNDATLKRYKRLNEDEVLLIPENKSMKEIKVKADHLKIQGKMVGLIRVL.

A DNA-binding region (H-T-H motif) is located at residues 28–48 (IRDIMKHFNFKSPRAAHKHLI). Catalysis depends on for autocatalytic cleavage activity residues Ser-125 and Lys-163.

Belongs to the peptidase S24 family. As to quaternary structure, homodimer.

The catalysed reaction is Hydrolysis of Ala-|-Gly bond in repressor LexA.. Represses a number of genes involved in the response to DNA damage (SOS response), including recA and lexA. In the presence of single-stranded DNA, RecA interacts with LexA causing an autocatalytic cleavage which disrupts the DNA-binding part of LexA, leading to derepression of the SOS regulon and eventually DNA repair. The chain is LexA repressor from Petrotoga mobilis (strain DSM 10674 / SJ95).